Consider the following 65-residue polypeptide: Large ribosomal subunit protein bL35 (65 aa).

The tract at residues 1–28 (MPKMKTNRSAAKRFGKTGSGKFTRRRQN) is disordered.

Belongs to the bacterial ribosomal protein bL35 family.

The protein is Large ribosomal subunit protein bL35 of Solidesulfovibrio magneticus (strain ATCC 700980 / DSM 13731 / RS-1) (Desulfovibrio magneticus).